Here is a 210-residue protein sequence, read N- to C-terminus: Transcription factor ALC (210 aa).

The segment at 1-49 is disordered; it reads MGDSDVGDRLPPPSSSDELSSFLRQILSRTPTAQPSSPPKSTNVSSAET. Polar residues predominate over residues 27–48; sequence LSRTPTAQPSSPPKSTNVSSAE. A bHLH domain is found at 93-142; the sequence is IDAQFHNLSEKKRRSKINEKMKALQKLIPNSNKTDKASMLDEAIEYLKQL.

Homodimer. In terms of tissue distribution, expressed constitutively in roots, leaves, stems, and flowers. Confined to the valve margins of the silique.

It localises to the nucleus. In terms of biological role, required for the dehiscence of fruit, especially for the separation of the valve cells from the replum. Promotes the differentiation of a strip of labile nonlignified cells sandwiched between layers of lignified cells. In Arabidopsis thaliana (Mouse-ear cress), this protein is Transcription factor ALC (ALC).